A 146-amino-acid chain; its full sequence is Hemoglobin subunit beta (146 aa).

The region spanning 2–146 is the Globin domain; that stretch reads QWSAEEKQLI…VAHALARKYH (145 aa). 2 residues coordinate heme b: H63 and H92.

It belongs to the globin family. Heterotetramer of two alpha chains and two beta chains. Red blood cells.

Its function is as follows. Involved in oxygen transport from the lung to the various peripheral tissues. The sequence is that of Hemoglobin subunit beta (HBB) from Struthio camelus (Common ostrich).